Here is a 119-residue protein sequence, read N- to C-terminus: MAFKDTGKTPVEPEVAIHRIRITLTSRNVKSLEKVCADLIRGAKEKNLKVKGPVRMPTKTLRITTRKTPCGEGSKTWDRFQMRIPKRLIDLHSPSEIVKQITSISIEPGVEVEVTIADA.

At Ala-2 the chain carries N-acetylalanine. A Glycyl lysine isopeptide (Lys-Gly) (interchain with G-Cter in ubiquitin) cross-link involves residue Lys-4. Lys-8 is modified (N6-succinyllysine; alternate). A Glycyl lysine isopeptide (Lys-Gly) (interchain with G-Cter in ubiquitin); alternate cross-link involves residue Lys-8. The residue at position 9 (Thr-9) is a Phosphothreonine. Residues Lys-34 and Lys-75 each carry the N6-acetyllysine modification. A Phosphoserine modification is found at Ser-93.

The protein belongs to the universal ribosomal protein uS10 family. As to quaternary structure, component of the 40S small ribosomal subunit. In terms of processing, polyubiquitinated by ZNF598 via 'Lys-63'-linked ubiquitin chains when a ribosome has stalled, initiating the ribosome quality control (RQC) pathway to degrade the potentially detrimental aberrant nascent polypeptide. Deubiquitinated by OTUD3 and USP21, antagonizing ZNF598 activity. Post-translationally, ufmylated by UFL1.

It is found in the cytoplasm. Functionally, component of the small ribosomal subunit. The ribosome is a large ribonucleoprotein complex responsible for the synthesis of proteins in the cell. The chain is Small ribosomal subunit protein uS10 (RPS20) from Sus scrofa (Pig).